The primary structure comprises 164 residues: Peptidyl-prolyl cis-trans isomerase A (164 aa).

Residue M1 is modified to N-acetylmethionine. The residue at position 2 (V2) is an N-acetylvaline; in Peptidyl-prolyl cis-trans isomerase A, N-terminally processed. The region spanning F7–Q163 is the PPIase cyclophilin-type domain. The residue at position 28 (K28) is an N6-acetyllysine; alternate. Residue K28 forms a Glycyl lysine isopeptide (Lys-Gly) (interchain with G-Cter in SUMO2); alternate linkage. A Glycyl lysine isopeptide (Lys-Gly) (interchain with G-Cter in ubiquitin); alternate cross-link involves residue K28. K44 and K76 each carry N6-acetyllysine. Residue S77 is modified to Phosphoserine. K82 bears the N6-acetyllysine; alternate mark. A Glycyl lysine isopeptide (Lys-Gly) (interchain with G-Cter in SUMO2); alternate cross-link involves residue K82. Residue T93 is modified to Phosphothreonine. An N-linked (GlcNAc...) asparagine glycan is attached at N108. Residues K125, K131, and K133 each carry the N6-acetyllysine modification.

It belongs to the cyclophilin-type PPIase family. PPIase A subfamily. As to quaternary structure, interacts with protein phosphatase PPP3CA/calcineurin A. Interacts with isoform 2 of BSG/CD147. Interacts with FOXO1; the interaction promotes FOXO1 dephosphorylation, nuclear accumulation and transcriptional activity. Interacts with integrin ITGA2B:ITGB3; the interaction is ROS and peptidyl-prolyl cis-trans isomerase (PPIase) activity-dependent and is increased in the presence of thrombin. Interacts with MAP3K5. Interacts with TARDBP; the interaction is dependent on the RNA-binding activity of TARDBP and the PPIase activity of PPIA/CYPA and the acetylation of PPIA/CYPA at Lys-125 favors the interaction. Interacts with HNRNPA1, HNRNPA2B1, HNRNPC, RBMX, HNRNPK and HNRNPM. In terms of processing, acetylation at Lys-125 markedly inhibits catalysis of cis to trans isomerization. PPIA acetylation also antagonizes the immunosuppressive effects of cyclosporine by inhibiting the sequential steps of cyclosporine binding and calcineurin inhibition. Acetylation at Lys-125 favors the interaction with TARDBP.

Its subcellular location is the cytoplasm. It localises to the secreted. The protein localises to the nucleus. It carries out the reaction [protein]-peptidylproline (omega=180) = [protein]-peptidylproline (omega=0). Its activity is regulated as follows. Binds cyclosporin A (CsA). CsA mediates some of its effects via an inhibitory action on PPIase. Functionally, catalyzes the cis-trans isomerization of proline imidic peptide bonds in oligopeptides. Exerts a strong chemotactic effect on leukocytes partly through activation of one of its membrane receptors BSG/CD147, initiating a signaling cascade that culminates in MAPK/ERK activation. Activates endothelial cells (ECs) in a proinflammatory manner by stimulating activation of NF-kappa-B and ERK, JNK and p38 MAP-kinases and by inducing expression of adhesion molecules including SELE and VCAM1. Induces apoptosis in ECs by promoting the FOXO1-dependent expression of CCL2 and BCL2L11 which are involved in EC chemotaxis and apoptosis. In response to oxidative stress, initiates proapoptotic and antiapoptotic signaling in ECs via activation of NF-kappa-B and AKT1 and up-regulation of antiapoptotic protein BCL2. Negatively regulates MAP3K5/ASK1 kinase activity, autophosphorylation and oxidative stress-induced apoptosis mediated by MAP3K5/ASK1. Necessary for the assembly of TARDBP in heterogeneous nuclear ribonucleoprotein (hnRNP) complexes and regulates TARDBP binding to RNA UG repeats and TARDBP-dependent expression of HDAC6, ATG7 and VCP which are involved in clearance of protein aggregates. Plays an important role in platelet activation and aggregation. Regulates calcium mobilization and integrin ITGA2B:ITGB3 bidirectional signaling via increased ROS production as well as by facilitating the interaction between integrin and the cell cytoskeleton. Binds heparan sulfate glycosaminoglycans. This is Peptidyl-prolyl cis-trans isomerase A (PPIA) from Saguinus oedipus (Cotton-top tamarin).